A 179-amino-acid polypeptide reads, in one-letter code: Large ribosomal subunit protein uL5 (179 aa).

Belongs to the universal ribosomal protein uL5 family. Part of the 50S ribosomal subunit; part of the 5S rRNA/L5/L18/L25 subcomplex. Contacts the 5S rRNA and the P site tRNA. Forms a bridge to the 30S subunit in the 70S ribosome.

Functionally, this is one of the proteins that bind and probably mediate the attachment of the 5S RNA into the large ribosomal subunit, where it forms part of the central protuberance. In the 70S ribosome it contacts protein S13 of the 30S subunit (bridge B1b), connecting the 2 subunits; this bridge is implicated in subunit movement. Contacts the P site tRNA; the 5S rRNA and some of its associated proteins might help stabilize positioning of ribosome-bound tRNAs. The polypeptide is Large ribosomal subunit protein uL5 (Halothermothrix orenii (strain H 168 / OCM 544 / DSM 9562)).